The chain runs to 594 residues: TOX high mobility group box family member 4-B (594 aa).

Disordered stretches follow at residues 160-225 and 522-545; these read GTIL…PQKP and ESPP…SPQC. Residues 207-217 show a composition bias toward basic residues; it reads KPKTPKKKKKK. The Nuclear localization signal signature appears at 212–217; sequence KKKKKK. A DNA-binding region (HMG box) is located at residues 222-290; sequence PQKPLSAYAL…EYLKALALYK (69 aa).

Component of the PNUTS-PP1 phosphatase complex.

Its subcellular location is the nucleus. It is found in the chromosome. Transcription factor that modulates cell fate reprogramming from the somatic state to the pluripotent and neuronal fate. Also acts as a regulatory component of protein phosphatase 1 (PP1) complexes. Component of the PNUTS-PP1 protein phosphatase complex, a PP1 complex that regulates RNA polymerase II transcription pause-release. PNUTS-PP1 also plays a role in the control of chromatin structure and cell cycle progression during the transition from mitosis into interphase. The sequence is that of TOX high mobility group box family member 4-B (tox4-b) from Xenopus laevis (African clawed frog).